Consider the following 359-residue polypeptide: Cytoplasmic tRNA 2-thiolation protein 1 (359 aa).

The protein belongs to the TtcA family. CTU1/NCS6/ATPBD3 subfamily. In terms of assembly, interacts with NCS2 and URM1. May act by forming a heterodimer with NCS2. Component of a large molecular weight complex of more than 250 kDa.

The protein localises to the cytoplasm. It localises to the mitochondrion. It functions in the pathway tRNA modification; 5-methoxycarbonylmethyl-2-thiouridine-tRNA biosynthesis. Its function is as follows. Plays a central role in 2-thiolation of mcm(5)S(2)U at tRNA wobble positions of tRNA(Lys), tRNA(Glu) and tRNA(Gln). Directly binds tRNAs and probably acts by catalyzing adenylation of tRNAs, an intermediate required for 2-thiolation. It is unclear whether it acts as a sulfurtransferase that transfers sulfur from thiocarboxylated URM1 onto the uridine of tRNAs at wobble position. Prior mcm(5) tRNA modification by the elongator complex is required for 2-thiolation. May also be involved in protein urmylation. May also be involved in protein urmylation and in invasive and pseudohyphal growth. The polypeptide is Cytoplasmic tRNA 2-thiolation protein 1 (Saccharomyces cerevisiae (strain ATCC 204508 / S288c) (Baker's yeast)).